The sequence spans 212 residues: NEDD4 family-interacting protein 1 (212 aa).

Over residues 1 to 14 (MSEQSSSSRYQQLQ) the composition is skewed to polar residues. Residues 1–40 (MSEQSSSSRYQQLQNEEEPGENAQASADAPPPYSSIAGES) are disordered. At 1 to 107 (MSEQSSSSRY…ADQLRIGNDG (107 aa)) the chain is on the cytoplasmic side. 2 short sequence motifs (PPxY motif) span residues 30 to 33 (PPPY) and 55 to 58 (PPSY). A helical membrane pass occupies residues 108–128 (IFMLTFFMAFLFNWIGFFLSF). Residues 129-134 (CLTSSA) lie on the Extracellular side of the membrane. The chain crosses the membrane as a helical span at residues 135 to 155 (AGRYGAISGFGLSLIKWILIV). Residues 156 to 163 (RFSTYFPG) lie on the Cytoplasmic side of the membrane. Residues 164–184 (YFDGQYWLWWVFLVLGFLLFL) traverse the membrane as a helical segment. Residues 185-212 (RGFINYAKVRKMPDNFSTLPRTRVLFIY) are Extracellular-facing.

The protein localises to the golgi apparatus membrane. Its function is as follows. May play a role in Golgi structure maintenance. This is NEDD4 family-interacting protein 1 (ndfip1) from Xenopus laevis (African clawed frog).